The chain runs to 401 residues: Nodulation protein E (401 aa).

In terms of domain architecture, Ketosynthase family 3 (KS3) spans 2–400 (DRRVVITGMG…GTNAVLAFKQ (399 aa)). Active-site for beta-ketoacyl synthase activity residues include cysteine 161, histidine 293, and histidine 330. The helical transmembrane segment at 328–347 (HAHCIGAASALEMIACVMAI) threads the bilayer.

It belongs to the thiolase-like superfamily. Beta-ketoacyl-ACP synthases family.

It localises to the cell inner membrane. Functionally, proposed to synthesize NOD factor fatty acyl chain. Involved in the synthesis of a highly unsaturated fatty acid moiety, which forms part of a lipo-oligosaccharide that is responsible for host specificity. This Rhizobium meliloti (Ensifer meliloti) protein is Nodulation protein E (nodE).